The chain runs to 473 residues: Adenosylhomocysteinase (473 aa).

Residues T64, D139, and E199 each contribute to the substrate site. 200–202 (TTT) serves as a coordination point for NAD(+). Substrate-binding residues include K229 and D233. NAD(+)-binding positions include N234, 263-268 (GYGDVG), E286, N321, 342-344 (IGH), and N387.

It belongs to the adenosylhomocysteinase family. Requires NAD(+) as cofactor.

Its subcellular location is the cytoplasm. It carries out the reaction S-adenosyl-L-homocysteine + H2O = L-homocysteine + adenosine. Its pathway is amino-acid biosynthesis; L-homocysteine biosynthesis; L-homocysteine from S-adenosyl-L-homocysteine: step 1/1. Functionally, may play a key role in the regulation of the intracellular concentration of adenosylhomocysteine. This Burkholderia mallei (strain SAVP1) protein is Adenosylhomocysteinase.